The following is a 310-amino-acid chain: GMP synthase [glutamine-hydrolyzing] subunit B (310 aa).

One can recognise a GMPS ATP-PPase domain in the interval 1–187; the sequence is MSFSDYISRI…LGLPTDIQPF (187 aa). Residue 27–33 participates in ATP binding; sequence SGGQDSS.

In terms of assembly, heterodimer composed of a glutamine amidotransferase subunit (A) and a GMP-binding subunit (B).

The catalysed reaction is XMP + L-glutamine + ATP + H2O = GMP + L-glutamate + AMP + diphosphate + 2 H(+). It functions in the pathway purine metabolism; GMP biosynthesis; GMP from XMP (L-Gln route): step 1/1. In terms of biological role, catalyzes the synthesis of GMP from XMP. In Thermoplasma volcanium (strain ATCC 51530 / DSM 4299 / JCM 9571 / NBRC 15438 / GSS1), this protein is GMP synthase [glutamine-hydrolyzing] subunit B (guaAB).